The sequence spans 900 residues: MPRKLFSKMPTTQGRSFYEELRGHDSEGYDGGSRAGLLDEENLNHNFQDYDLDHAEGLTVDDSRATLAGLRKTPASKVPPGHQNDRSMWLAHDDDADNDVPPSLLVEPRGAHLAGKPKRKQSRQAAYTMPGSSNTRAQWETIQAHQPLHNDEPFTQSHRGNGAPGSLFSGSASLDAKKMAEWRWANVQNLDKFIKEVYDYYRGCGIKAIITERVLHLGNVAFIAVLLTFLTQCVDYSLVRGSQKLSQIIVPQCTRKMSGWWNLGLWLFAFYFIWKAIQYILDLHRLFHVRDFYTHLLNIPDHDMQTITWQEVVARVMALRNQNSKTATTLTPLQRHFIGSQSKERLDASDIANRIMRRENYLIALFNKDILDLTIPLPFLRNRQYFSRTLEWTLMFSVLDMVFDEKGQVNQKFLRADRRGEISEKLRSRFQFAGIMILVLSPFVSLYLVIYYFLMYYHEIQKNPSVLSSRSYTPLAEWKFREFNELPHLFQKRLDMSKAFATHYMDQFPKVKTEMVAKSVAFVSGALATVLAIASVFDPELFLGFEITPDRTVLFYTAIFGSIWAVAHGMQSQDDVVFDPEYAMRNVIEYTHYEPDHWKDRLHSYDIKLEFAELYKPKIVIFLEEILGILTTPFVLFFSLPKCSDQIIDFFREFTLHIDGLGYVCTFAEFDFKKAMANAKKPSDGGDVRDEYYSAKHGKMEASYYGFIGNYGNFALNPKGAPGSHLPPGMRNQFHPPPAWPGLNSPPLGADMQTSRMGRSEFRSRSRAPGQGLRPGPSMVAPSPMASILLDPHHLPPSHLVNPGRASHPHRVQQNRRPGESNIIEESLEDEERGREGVNRHDDEEVYGHGDGMDESAWQTSPARTLSRDNSAIEGTGTAEAGVVDMIYQFNQAQFTRNGV.

Residues 1 to 213 are Cytoplasmic-facing; the sequence is MPRKLFSKMP…CGIKAIITER (213 aa). Residues 111 to 134 are disordered; that stretch reads AHLAGKPKRKQSRQAAYTMPGSSN. A helical membrane pass occupies residues 214–234; it reads VLHLGNVAFIAVLLTFLTQCV. Topologically, residues 235 to 262 are lumenal; the sequence is DYSLVRGSQKLSQIIVPQCTRKMSGWWN. A helical membrane pass occupies residues 263-283; that stretch reads LGLWLFAFYFIWKAIQYILDL. The Cytoplasmic segment spans residues 284–434; it reads HRLFHVRDFY…KLRSRFQFAG (151 aa). Residues 435–455 lie within the membrane without spanning it; the sequence is IMILVLSPFVSLYLVIYYFLM. At 456 to 524 the chain is on the cytoplasmic side; sequence YYHEIQKNPS…MVAKSVAFVS (69 aa). A helical transmembrane segment spans residues 525 to 545; it reads GALATVLAIASVFDPELFLGF. Residues 546–551 lie on the Lumenal side of the membrane; it reads EITPDR. The chain crosses the membrane as a helical span at residues 552 to 572; the sequence is TVLFYTAIFGSIWAVAHGMQS. At 573–618 the chain is on the cytoplasmic side; it reads QDDVVFDPEYAMRNVIEYTHYEPDHWKDRLHSYDIKLEFAELYKPK. The stretch at 619-639 is an intramembrane region; the sequence is IVIFLEEILGILTTPFVLFFS. The Cytoplasmic segment spans residues 640-900; the sequence is LPKCSDQIID…NQAQFTRNGV (261 aa). The tract at residues 723–873 is disordered; it reads GSHLPPGMRN…RTLSRDNSAI (151 aa). Positions 832 to 852 are enriched in basic and acidic residues; sequence ERGREGVNRHDDEEVYGHGDG. The segment covering 857-870 has biased composition (polar residues); that stretch reads AWQTSPARTLSRDN.

This sequence belongs to the ATG9 family. Homotrimer; forms a homotrimer with a central pore that forms a path between the two membrane leaflets. Phosphorylated by ATG1. ATG1 phosphorylation is required for preautophagosome elongation.

Its subcellular location is the preautophagosomal structure membrane. The protein localises to the cytoplasmic vesicle membrane. It localises to the golgi apparatus membrane. The protein resides in the endoplasmic reticulum membrane. It carries out the reaction a 1,2-diacyl-sn-glycero-3-phosphocholine(in) = a 1,2-diacyl-sn-glycero-3-phosphocholine(out). It catalyses the reaction a 1,2-diacyl-sn-glycero-3-phospho-L-serine(in) = a 1,2-diacyl-sn-glycero-3-phospho-L-serine(out). The catalysed reaction is a 1,2-diacyl-sn-glycero-3-phosphoethanolamine(in) = a 1,2-diacyl-sn-glycero-3-phosphoethanolamine(out). The enzyme catalyses a 1,2-diacyl-sn-glycero-3-phospho-(1D-myo-inositol-3-phosphate)(in) = a 1,2-diacyl-sn-glycero-3-phospho-(1D-myo-inositol-3-phosphate)(out). Its function is as follows. Phospholipid scramblase involved in autophagy and cytoplasm to vacuole transport (Cvt) vesicle formation. Cycles between the preautophagosomal structure/phagophore assembly site (PAS) and the cytoplasmic vesicle pool and supplies membrane for the growing autophagosome. Lipid scramblase activity plays a key role in preautophagosomal structure/phagophore assembly by distributing the phospholipids that arrive through ATG2 from the cytoplasmic to the luminal leaflet of the bilayer, thereby driving autophagosomal membrane expansion. Required for mitophagy. Also involved in endoplasmic reticulum-specific autophagic process and is essential for the survival of cells subjected to severe ER stress. Different machineries are required for anterograde trafficking to the PAS during either the Cvt pathway or bulk autophagy and for retrograde trafficking. In Podospora anserina (Pleurage anserina), this protein is Autophagy-related protein 9 (ATG9).